A 250-amino-acid polypeptide reads, in one-letter code: tRNA (guanine-N(1)-)-methyltransferase (250 aa).

S-adenosyl-L-methionine is bound by residues glycine 116 and 136–141; that span reads IGDYVL.

The protein belongs to the RNA methyltransferase TrmD family. In terms of assembly, homodimer.

It is found in the cytoplasm. It catalyses the reaction guanosine(37) in tRNA + S-adenosyl-L-methionine = N(1)-methylguanosine(37) in tRNA + S-adenosyl-L-homocysteine + H(+). Specifically methylates guanosine-37 in various tRNAs. This is tRNA (guanine-N(1)-)-methyltransferase from Pseudomonas entomophila (strain L48).